A 1475-amino-acid polypeptide reads, in one-letter code: Alpha-glucan water dikinase, chloroplastic (1475 aa).

A chloroplast-targeting transit peptide spans 1–85 (MSNSIGRNVL…HRPVLITPRA (85 aa)). Catalysis depends on H1077, which acts as the Tele-phosphohistidine intermediate.

It belongs to the PEP-utilizing enzyme family. In terms of assembly, homodimer. It depends on Mg(2+) as a cofactor.

It localises to the plastid. It is found in the chloroplast. It carries out the reaction [(1-&gt;4)-alpha-D-glucosyl](n) + n ATP + n H2O = [(1-&gt;4)-6-phospho-alpha-D-glucosyl](n) + n AMP + n phosphate + 2n H(+). Its function is as follows. Mediates the incorporation of phosphate into starch-like alpha-glucan, mostly at the C-6 position of glucose units. Acts as an overall regulator of starch mobilization. Required for starch degradation, suggesting that the phosphate content of starch regulates its degradability. The chain is Alpha-glucan water dikinase, chloroplastic (R1) from Citrus reticulata (Tangerine).